Here is a 217-residue protein sequence, read N- to C-terminus: Large ribosomal subunit protein uL3 (217 aa).

A disordered region spans residues 127–162; that stretch reads GFSRGPMSHGSKNHRAPGSTGAGTTPGRIYPGKRMA. The segment covering 142-153 has biased composition (low complexity); that stretch reads APGSTGAGTTPG.

This sequence belongs to the universal ribosomal protein uL3 family. Part of the 50S ribosomal subunit. Forms a cluster with proteins L14 and L19.

In terms of biological role, one of the primary rRNA binding proteins, it binds directly near the 3'-end of the 23S rRNA, where it nucleates assembly of the 50S subunit. The chain is Large ribosomal subunit protein uL3 from Prochlorococcus marinus (strain AS9601).